Reading from the N-terminus, the 180-residue chain is Geminin homolog (180 aa).

A compositionally biased stretch (polar residues) spans Met-1–Lys-27. The interval Met-1–Ile-29 is disordered.

The protein belongs to the geminin family. Homodimer. Interacts with cdt-1; the interaction most likely inhibits the ability of cdt-1 to load the mini-chromosome maintenance (MCM) complex onto DNA and therefore reduces DNA replication licensing activity. Interacts with nob-1 and ceh-32.

The protein resides in the cytoplasm. It localises to the nucleus. Its function is as follows. Inhibits DNA replication by binding to the DNA replication licensing factor cdt-1. Its interaction with cdt-1 prevents the cdt-1 loading of the mini-chromosome maintenance (MCM) complex onto DNA and therefore DNA replication licencing. This chain is Geminin homolog, found in Caenorhabditis elegans.